Here is a 362-residue protein sequence, read N- to C-terminus: Chorismate synthase (362 aa).

R47 is a binding site for NADP(+). FMN is bound by residues 124-126, G286, 301-305, and R327; these read RSS and KPTAT.

The protein belongs to the chorismate synthase family. As to quaternary structure, homotetramer. FMNH2 is required as a cofactor.

The enzyme catalyses 5-O-(1-carboxyvinyl)-3-phosphoshikimate = chorismate + phosphate. Its pathway is metabolic intermediate biosynthesis; chorismate biosynthesis; chorismate from D-erythrose 4-phosphate and phosphoenolpyruvate: step 7/7. In terms of biological role, catalyzes the anti-1,4-elimination of the C-3 phosphate and the C-6 proR hydrogen from 5-enolpyruvylshikimate-3-phosphate (EPSP) to yield chorismate, which is the branch point compound that serves as the starting substrate for the three terminal pathways of aromatic amino acid biosynthesis. This reaction introduces a second double bond into the aromatic ring system. The polypeptide is Chorismate synthase (Gloeothece citriformis (strain PCC 7424) (Cyanothece sp. (strain PCC 7424))).